Reading from the N-terminus, the 80-residue chain is uncharacterized protein (80 aa).

This is an uncharacterized protein from Vaccinia virus (strain Western Reserve) (VACV).